The chain runs to 207 residues: DNA-directed RNA polymerase subunit alpha (207 aa).

Belongs to the RNA polymerase alpha chain family. In plastids the minimal PEP RNA polymerase catalytic core is composed of four subunits: alpha, beta, beta', and beta''. When a (nuclear-encoded) sigma factor is associated with the core the holoenzyme is formed, which can initiate transcription.

The protein resides in the plastid. The protein localises to the chloroplast. The catalysed reaction is RNA(n) + a ribonucleoside 5'-triphosphate = RNA(n+1) + diphosphate. Functionally, DNA-dependent RNA polymerase catalyzes the transcription of DNA into RNA using the four ribonucleoside triphosphates as substrates. This is DNA-directed RNA polymerase subunit alpha (rpoA) from Euglena anabaena (Euglenaria anabaena).